Here is a 798-residue protein sequence, read N- to C-terminus: Integrin beta-1 (798 aa).

Residues 1–20 (MNLQLIFWIGLISSVCYVFG) form the signal peptide. At 21-728 (QADENRCLKA…ETPECPTGPD (708 aa)) the chain is on the extracellular side. The PSI domain maps to 26–76 (RCLKANAKSCGECIQAGPNCGWCTNSTFLQEGMPTSARCDDLEALRKKGCH). 28 disulfide bridges follow: Cys-27–Cys-45, Cys-35–Cys-464, Cys-38–Cys-64, Cys-48–Cys-75, Cys-207–Cys-213, Cys-261–Cys-301, Cys-401–Cys-415, Cys-435–Cys-462, Cys-466–Cys-486, Cys-477–Cys-489, Cys-491–Cys-500, Cys-502–Cys-533, Cys-516–Cys-531, Cys-525–Cys-536, Cys-538–Cys-553, Cys-555–Cys-576, Cys-560–Cys-574, Cys-568–Cys-579, Cys-581–Cys-590, Cys-592–Cys-615, Cys-599–Cys-613, Cys-607–Cys-618, Cys-620–Cys-630, Cys-633–Cys-636, Cys-640–Cys-691, Cys-646–Cys-665, Cys-649–Cys-661, and Cys-699–Cys-723. Asn-50 carries N-linked (GlcNAc...) asparagine glycosylation. Positions 75–84 (CHPDDIENPR) are enriched in basic and acidic residues. The segment at 75-107 (CHPDDIENPRGSKNIKKNKNVTNRSKGTAEKLQ) is disordered. 2 N-linked (GlcNAc...) asparagine glycosylation sites follow: Asn-94 and Asn-97. The VWFA domain occupies 140 to 378 (DYPIDLYYLM…QLIIDAYNSL (239 aa)). Mg(2+) is bound by residues Ser-152 and Ser-154. Ca(2+)-binding residues include Ser-154, Asp-157, Asp-158, and Glu-189. A CX3CL1-binding region spans residues 207–213 (CTSEQNC). A glycan (N-linked (GlcNAc...) asparagine) is linked at Asn-212. The Ca(2+) site is built by Asn-244, Asp-246, Pro-248, and Glu-249. Residue Glu-249 coordinates Mg(2+). Asn-269 is a glycosylation site (N-linked (GlcNAc...) asparagine). The segment at 295-314 (LPNDGHCHLENDVYTMSHYY) is CX3CL1-binding. Ala-362 contacts Ca(2+). N-linked (GlcNAc...) asparagine glycosylation is found at Asn-363, Asn-406, and Asn-417. The tract at residues 383–465 (ILENSKLPEG…IILQFICECE (83 aa)) is interaction with TMEM182. I-EGF domains follow at residues 466–501 (CQSEGIPSSPKCHDGNGTFECGACRCNEGRVGRHCE), 502–554 (CSTD…KFCE), 555–591 (CDNFNCDRSNGLICGGNGVCKCRVCECNPNYTGSACD), and 592–631 (CSLDTTSCMAVNGQICNGRGVCECGVCKCTDPKFQGPTCE). An N-linked (GlcNAc...) asparagine glycan is attached at Asn-481. The N-linked (GlcNAc...) asparagine glycan is linked to Asn-520. Asn-584 carries N-linked (GlcNAc...) asparagine glycosylation. The N-linked (GlcNAc...) asparagine glycan is linked to Asn-669. Residues 729-749 (IIPIVAGVVAGIVLIGLALLL) traverse the membrane as a helical segment. The Cytoplasmic segment spans residues 750 to 798 (IWKLLMIIHDRREFAKFEKEKMNAKWDTGENPIYKSAVTTVVNPKYEGK). Positions 762–767 (EFAKFE) are signal for sorting from recycling endosomes; interaction with ACAP1. The residue at position 777 (Thr-777) is a Phosphothreonine. The residue at position 783 (Tyr-783) is a Phosphotyrosine. Ser-785 is modified (phosphoserine). Positions 785-792 (SAVTTVVN) are interaction with ITGB1BP1. Position 789 is a phosphothreonine (Thr-789). Lys-794 is subject to N6-acetyllysine; alternate. Lys-794 participates in a covalent cross-link: Glycyl lysine isopeptide (Lys-Gly) (interchain with G-Cter in SUMO1); alternate.

The protein belongs to the integrin beta chain family. As to quaternary structure, interacts with seprase FAP (seprase); the interaction occurs at the cell surface of invadopodia membrane in a collagen-dependent manner. Heterodimer of an alpha and a beta subunit. Beta-1 associates with either alpha-1, alpha-2, alpha-3, alpha-4, alpha-5, alpha-6, alpha-7, alpha-8, alpha-9, alpha-10, alpha-11 or alpha-V. ITGA6:ITGB1 is found in a complex with CD9; interaction takes place in oocytes and is involved in sperm-egg fusion. Binds LGALS3BP and NMRK2, when associated with alpha-7, but not with alpha-5. Interacts with FLNA, FLNB, FLNC and RANBP9. Interacts with KRT1 in the presence of RACK1 and SRC. Interacts with JAML; integrin alpha-4/beta-1 may regulate leukocyte to endothelial cells adhesion by controlling JAML homodimerization. Interacts with RAB21. Interacts (via the cytoplasmic region) with RAB25 (via the hypervariable C-terminal region). Interacts with MYO10. Interacts with ITGB1BP1 (via C-terminal region); the interaction is a prerequisite for focal adhesion disassembly. Interacts with TLN1; the interaction is prevented by competitive binding of ITGB1BP1. Interacts with ACAP1; required for ITGB1 recycling. Interacts with ASAP3. Interacts with FERMT2; the interaction is inhibited in presence of ITGB1BP1. Interacts with DAB2. Interacts with FGR and HCK. Interacts with alpha-7A and alpha-7B in adult skeletal muscle. Interacts with alpha-7B in cardiomyocytes of adult heart. Interacts with EMP2; the interaction may be direct or indirect and ITGB1 has a heterodimer form. ITGA5:ITGB1 interacts with CCN3. ITGA4:ITGB1 is found in a ternary complex with CX3CR1 and CX3CL1. ITGA5:ITGB1 interacts with FBN1. ITGA5:ITGB1 interacts with IL1B. Interacts with MDK. ITGA4:ITGB1 interacts with MDK; this interaction mediates MDK-induced osteoblast cells migration through PXN phosphorylation. ITGA6:ITGB1 interacts with MDK; this interaction mediates MDK-induced neurite-outgrowth. ITGA5:ITGB1 interacts with ACE2. Interacts with TMEM182 and LAMB1. Interacts with tensin TNS3; TNS3 also interacts with PEAK1, thus acting as an adapter molecule to bridge the association of PEAK1 with ITGB1. Interacts with tensin TNS4; the interaction displaces tensin TNS3 from the ITGB1 cytoplasmic tail and promotes ITGB1 stability. Integrin ITGA9:ITGB1 interacts with SPP1/OPN (via N-terminus). Integrin ITGA9:ITGB1 interacts with TNC/TNFN3 (via the 3rd Fibronectin type-III domain). Integrins ITGA4:ITGB1 and ITGA9:ITGB1 interact with SVEP1 (via Sushi domain 21); thereby inhibit Ca(2+) intracellular signaling and as a result repress vasocontraction. ITGA4:ITGB1 and ITGA5:ITGB1 interacts with SELP. Interacts with CD248. ITGA5:ITGB1 interacts with IGFBP1. ITGA4:ITGB1 interacts with BCAM. Interacts with ADGRG6. In terms of tissue distribution, expressed in the spleen, thymus, alveolar macrophages, bone marrow, liver and kidney.

The protein localises to the cell membrane. It localises to the cell projection. Its subcellular location is the invadopodium membrane. The protein resides in the ruffle membrane. It is found in the recycling endosome. The protein localises to the melanosome. It localises to the lamellipodium. Its subcellular location is the ruffle. The protein resides in the cell junction. It is found in the focal adhesion. Integrins alpha-1/beta-1, alpha-2/beta-1, alpha-10/beta-1 and alpha-11/beta-1 are receptors for collagen. Integrins alpha-1/beta-1 and alpha-2/beta-2 recognize the proline-hydroxylated sequence G-F-P-G-E-R in collagen. Integrins alpha-2/beta-1, alpha-3/beta-1, alpha-4/beta-1, alpha-5/beta-1, alpha-8/beta-1, alpha-10/beta-1, alpha-11/beta-1 and alpha-V/beta-1 are receptors for fibronectin. Alpha-4/beta-1 recognizes one or more domains within the alternatively spliced CS-1 and CS-5 regions of fibronectin. Integrin alpha-5/beta-1 is a receptor for fibrinogen. Integrin alpha-1/beta-1, alpha-2/beta-1, alpha-6/beta-1 and alpha-7/beta-1 are receptors for lamimin. Integrin alpha-6/beta-1 (ITGA6:ITGB1) is present in oocytes and is involved in sperm-egg fusion. Integrin alpha-4/beta-1 is a receptor for VCAM1 and recognizes the sequence Q-I-D-S in VCAM1. Integrin alpha-9/beta-1 is a receptor for VCAM1, cytotactin and osteopontin. It recognizes the sequence A-E-I-D-G-I-E-L in cytotactin. Integrin alpha-3/beta-1 is a receptor for epiligrin, thrombospondin and CSPG4. Integrin alpha-3/beta-1 provides a docking site for FAP (seprase) at invadopodia plasma membranes in a collagen-dependent manner and hence may participate in the adhesion, formation of invadopodia and matrix degradation processes, promoting cell invasion. Alpha-3/beta-1 may mediate with LGALS3 the stimulation by CSPG4 of endothelial cells migration. Integrin alpha-V/beta-1 is a receptor for vitronectin. Beta-1 integrins recognize the sequence R-G-D in a wide array of ligands. When associated with alpha-7/beta-1 integrin, regulates cell adhesion and laminin matrix deposition. Involved in promoting endothelial cell motility and angiogenesis. Involved in osteoblast compaction through the fibronectin fibrillogenesis cell-mediated matrix assembly process and the formation of mineralized bone nodules. May be involved in up-regulation of the activity of kinases such as PKC via binding to KRT1. Together with KRT1 and RACK1, serves as a platform for SRC activation or inactivation. Plays a mechanistic adhesive role during telophase, required for the successful completion of cytokinesis. ITGA4:ITGB1 binds to fractalkine (CX3CL1) and may act as its coreceptor in CX3CR1-dependent fractalkine signaling. ITGA4:ITGB1 and ITGA5:ITGB1 bind to PLA2G2A via a site (site 2) which is distinct from the classical ligand-binding site (site 1) and this induces integrin conformational changes and enhanced ligand binding to site 1. ITGA5:ITGB1 acts as a receptor for fibrillin-1 (FBN1) and mediates R-G-D-dependent cell adhesion to FBN1. ITGA5:ITGB1 acts as a receptor for fibronectin FN1 and mediates R-G-D-dependent cell adhesion to FN1. ITGA5:ITGB1 is a receptor for IL1B and binding is essential for IL1B signaling. ITGA5:ITGB3 is a receptor for soluble CD40LG and is required for CD40/CD40LG signaling. Plays an important role in myoblast differentiation and fusion during skeletal myogenesis. ITGA9:ITGB1 may play a crucial role in SVEP1/polydom-mediated myoblast cell adhesion. Integrins ITGA9:ITGB1 and ITGA4:ITGB1 repress PRKCA-mediated L-type voltage-gated channel Ca(2+) influx and ROCK-mediated calcium sensitivity in vascular smooth muscle cells via their interaction with SVEP1, thereby inhibit vasocontraction. The polypeptide is Integrin beta-1 (ITGB1) (Sus scrofa (Pig)).